Reading from the N-terminus, the 426-residue chain is UDP-N-acetylglucosamine 1-carboxyvinyltransferase (426 aa).

23–24 (KN) contributes to the phosphoenolpyruvate binding site. Position 99 (Arg-99) interacts with UDP-N-acetyl-alpha-D-glucosamine. Catalysis depends on Asp-123, which acts as the Proton donor. Asp-311 and Ile-333 together coordinate UDP-N-acetyl-alpha-D-glucosamine.

It belongs to the EPSP synthase family. MurA subfamily.

The protein resides in the cytoplasm. It catalyses the reaction phosphoenolpyruvate + UDP-N-acetyl-alpha-D-glucosamine = UDP-N-acetyl-3-O-(1-carboxyvinyl)-alpha-D-glucosamine + phosphate. It participates in cell wall biogenesis; peptidoglycan biosynthesis. Its function is as follows. Cell wall formation. Adds enolpyruvyl to UDP-N-acetylglucosamine. The polypeptide is UDP-N-acetylglucosamine 1-carboxyvinyltransferase (Nocardia farcinica (strain IFM 10152)).